The following is a 398-amino-acid chain: Mu-type opioid receptor (398 aa).

At 1–66 (MDSSTGPGNT…CPQTGSPSMV (66 aa)) the chain is on the extracellular side. N-linked (GlcNAc...) asparagine glycosylation is found at Asn-9, Asn-31, Asn-38, Asn-46, and Asn-53. A helical membrane pass occupies residues 67 to 91 (TAITIMALYSIVCVVGLFGNFLVMY). The Cytoplasmic portion of the chain corresponds to 92-104 (VIVRYTKMKTATN). The chain crosses the membrane as a helical span at residues 105 to 129 (IYIFNLALADALATSTLPFQSVNYL). The Extracellular portion of the chain corresponds to 130 to 140 (MGTWPFGTILC). A disulfide bridge links Cys-140 with Cys-217. The chain crosses the membrane as a helical span at residues 141–163 (KIVISIDYYNMFTSIFTLCTMSV). Over 164-183 (DRYIAVCHPVKALDFRTPRN) the chain is Cytoplasmic. Tyr-166 carries the post-translational modification Phosphotyrosine. Residues 184-205 (AKIVNVCNWILSSAIGLPVMFM) form a helical membrane-spanning segment. The Extracellular segment spans residues 206-228 (ATTKYRQGSIDCTLTFSHPTWYW). The helical transmembrane segment at 229-253 (ENLLKICVFIFAFIMPVLIITVCYG) threads the bilayer. The Cytoplasmic segment spans residues 254-277 (LMILRLKSVRMLSGSKEKDRNLRR). Residues 278 to 304 (ITRMVLVVVAVFIVCWTPIHIYVIIKA) traverse the membrane as a helical segment. The Extracellular portion of the chain corresponds to 305–312 (LITIPETT). The chain crosses the membrane as a helical span at residues 313 to 336 (FQTVSWHFCIALGYTNSCLNPVLY). The NPxxY; plays a role in stabilizing the activated conformation of the receptor motif lies at 332-336 (NPVLY). Topologically, residues 337-398 (AFLDENFKRC…NLEAETAPLP (62 aa)) are cytoplasmic. Residue Cys-351 is the site of S-palmitoyl cysteine attachment. The tract at residues 361–385 (QNSTRVRQNTREHPSTANTVDRTNH) is disordered. Ser-363 bears the Phosphoserine mark. A Phosphothreonine modification is found at Thr-370. Residue Ser-375 is modified to Phosphoserine. At Thr-394 the chain carries Phosphothreonine.

This sequence belongs to the G-protein coupled receptor 1 family. As to quaternary structure, forms homooligomers and heterooligomers with other GPCRs, such as OPRD1, OPRK1, OPRL1, NPFFR2, ADRA2A, SSTR2, CNR1 and CCR5 (probably in dimeric forms). Interacts with heterotrimeric G proteins; interaction with a heterotrimeric complex containing GNAI1, GNB1 and GNG2 stabilizes the active conformation of the receptor and increases its affinity for endomorphin-2, the synthetic opioid peptide DAMGO and for morphinan agonists. Interacts with PPL; the interaction disrupts agonist-mediated G-protein activation. Interacts (via C-terminus) with DNAJB4 (via C-terminus). Interacts with calmodulin; the interaction inhibits the constitutive activity of OPRM1; it abolishes basal and attenuates agonist-stimulated G-protein coupling. Interacts with FLNA, PLD2, RANBP9 and WLS and GPM6A. Interacts with RTP4. Interacts with SYP and GNAS. Interacts with RGS9, RGS17, RGS20, RGS4, PPP1R9B and HINT1. In terms of processing, phosphorylated. Differentially phosphorylated in basal and agonist-induced conditions. Agonist-mediated phosphorylation modulates receptor internalization. Phosphorylated by GRK2 in a agonist-dependent manner. Phosphorylation at Tyr-166 requires receptor activation, is dependent on non-receptor protein tyrosine kinase Src and results in a decrease in agonist efficacy by reducing G-protein coupling efficiency. Phosphorylated on tyrosine residues; the phosphorylation is involved in agonist-induced G-protein-independent receptor down-regulation. Phosphorylation at Ser-375 is involved in G-protein-dependent but not beta-arrestin-dependent activation of the ERK pathway. Ubiquitinated. A basal ubiquitination seems not to be related to degradation. Ubiquitination is increased upon formation of OPRM1:OPRD1 oligomers leading to proteasomal degradation; the ubiquitination is diminished by RTP4. Brain. Is expressed in the cerebral cortex, caudate putamen, nucleus accumbens, septal nuclei, thalamus, hippocampus, and habenula. Not detected in cerebellum.

It is found in the cell membrane. The protein localises to the cell projection. Its subcellular location is the axon. It localises to the perikaryon. The protein resides in the dendrite. It is found in the endosome. In terms of biological role, receptor for endogenous opioids such as beta-endorphin and endomorphin. Receptor for natural and synthetic opioids including morphine, heroin, DAMGO, fentanyl, etorphine, buprenorphin and methadone. Also activated by enkephalin peptides, such as Met-enkephalin or Met-enkephalin-Arg-Phe, with higher affinity for Met-enkephalin-Arg-Phe. Agonist binding to the receptor induces coupling to an inactive GDP-bound heterotrimeric G-protein complex and subsequent exchange of GDP for GTP in the G-protein alpha subunit leading to dissociation of the G-protein complex with the free GTP-bound G-protein alpha and the G-protein beta-gamma dimer activating downstream cellular effectors. The agonist- and cell type-specific activity is predominantly coupled to pertussis toxin-sensitive G(i) and G(o) G alpha proteins, GNAI1, GNAI2, GNAI3 and GNAO1 isoforms Alpha-1 and Alpha-2, and to a lesser extent to pertussis toxin-insensitive G alpha proteins GNAZ and GNA15. They mediate an array of downstream cellular responses, including inhibition of adenylate cyclase activity and both N-type and L-type calcium channels, activation of inward rectifying potassium channels, mitogen-activated protein kinase (MAPK), phospholipase C (PLC), phosphoinositide/protein kinase (PKC), phosphoinositide 3-kinase (PI3K) and regulation of NF-kappa-B. Also couples to adenylate cyclase stimulatory G alpha proteins. The selective temporal coupling to G-proteins and subsequent signaling can be regulated by RGSZ proteins, such as RGS9, RGS17 and RGS4. Phosphorylation by members of the GPRK subfamily of Ser/Thr protein kinases and association with beta-arrestins is involved in short-term receptor desensitization. Beta-arrestins associate with the GPRK-phosphorylated receptor and uncouple it from the G-protein thus terminating signal transduction. The phosphorylated receptor is internalized through endocytosis via clathrin-coated pits which involves beta-arrestins. The activation of the ERK pathway occurs either in a G-protein-dependent or a beta-arrestin-dependent manner and is regulated by agonist-specific receptor phosphorylation. Acts as a class A G-protein coupled receptor (GPCR) which dissociates from beta-arrestin at or near the plasma membrane and undergoes rapid recycling. Receptor down-regulation pathways are varying with the agonist and occur dependent or independent of G-protein coupling. Endogenous ligands induce rapid desensitization, endocytosis and recycling. Heterooligomerization with other GPCRs can modulate agonist binding, signaling and trafficking properties. The protein is Mu-type opioid receptor (Oprm1) of Rattus norvegicus (Rat).